The chain runs to 274 residues: Tryptophan synthase alpha chain (274 aa).

Residues Glu49 and Asp60 each act as proton acceptor in the active site.

It belongs to the TrpA family. In terms of assembly, tetramer of two alpha and two beta chains.

It catalyses the reaction (1S,2R)-1-C-(indol-3-yl)glycerol 3-phosphate + L-serine = D-glyceraldehyde 3-phosphate + L-tryptophan + H2O. It participates in amino-acid biosynthesis; L-tryptophan biosynthesis; L-tryptophan from chorismate: step 5/5. In terms of biological role, the alpha subunit is responsible for the aldol cleavage of indoleglycerol phosphate to indole and glyceraldehyde 3-phosphate. The protein is Tryptophan synthase alpha chain of Zymomonas mobilis subsp. mobilis (strain ATCC 31821 / ZM4 / CP4).